The chain runs to 370 residues: Peptide chain release factor 1 (370 aa).

An N5-methylglutamine modification is found at Q231. Basic and acidic residues predominate over residues 284–293; sequence AREERERETR. Positions 284–303 are disordered; sequence AREERERETRAAQVGTGERS.

This sequence belongs to the prokaryotic/mitochondrial release factor family. Methylated by PrmC. Methylation increases the termination efficiency of RF1.

It localises to the cytoplasm. Its function is as follows. Peptide chain release factor 1 directs the termination of translation in response to the peptide chain termination codons UAG and UAA. The sequence is that of Peptide chain release factor 1 from Deinococcus geothermalis (strain DSM 11300 / CIP 105573 / AG-3a).